We begin with the raw amino-acid sequence, 87 residues long: Small ribosomal subunit protein bS20 (87 aa).

Belongs to the bacterial ribosomal protein bS20 family.

Binds directly to 16S ribosomal RNA. This chain is Small ribosomal subunit protein bS20, found in Clostridium beijerinckii (strain ATCC 51743 / NCIMB 8052) (Clostridium acetobutylicum).